We begin with the raw amino-acid sequence, 445 residues long: tRNA-2-methylthio-N(6)-dimethylallyladenosine synthase (445 aa).

The MTTase N-terminal domain occupies 2–117 (QGLYIKSYGC…LPELIVKARK (116 aa)). Positions 11, 47, 80, 157, 161, and 164 each coordinate [4Fe-4S] cluster. The Radical SAM core domain maps to 143–374 (KNQKVSAFIS…QELVHKQQLE (232 aa)). A TRAM domain is found at 377–441 (KKMIGETHPV…KNHLTGIIPN (65 aa)).

The protein belongs to the methylthiotransferase family. MiaB subfamily. As to quaternary structure, monomer. It depends on [4Fe-4S] cluster as a cofactor.

It is found in the cytoplasm. It catalyses the reaction N(6)-dimethylallyladenosine(37) in tRNA + (sulfur carrier)-SH + AH2 + 2 S-adenosyl-L-methionine = 2-methylsulfanyl-N(6)-dimethylallyladenosine(37) in tRNA + (sulfur carrier)-H + 5'-deoxyadenosine + L-methionine + A + S-adenosyl-L-homocysteine + 2 H(+). In terms of biological role, catalyzes the methylthiolation of N6-(dimethylallyl)adenosine (i(6)A), leading to the formation of 2-methylthio-N6-(dimethylallyl)adenosine (ms(2)i(6)A) at position 37 in tRNAs that read codons beginning with uridine. This chain is tRNA-2-methylthio-N(6)-dimethylallyladenosine synthase, found in Ehrlichia ruminantium (strain Welgevonden).